The following is a 225-amino-acid chain: Chalcone--flavanone isomerase 3 (225 aa).

Residues T51, N116, and T193 each contribute to the substrate site.

It belongs to the chalcone isomerase family.

The enzyme catalyses a chalcone = a flavanone.. The protein operates within secondary metabolite biosynthesis; flavonoid biosynthesis. Its function is as follows. Catalyzes the intramolecular cyclization of bicyclic chalcones into tricyclic (S)-flavanones. Responsible for the isomerization of 4,2',4',6'-tetrahydroxychalcone (also termed chalcone) into naringenin. The chain is Chalcone--flavanone isomerase 3 (CHI3) from Lotus japonicus (Lotus corniculatus var. japonicus).